A 536-amino-acid chain; its full sequence is Light-independent protochlorophyllide reductase subunit B (536 aa).

D36 contributes to the [4Fe-4S] cluster binding site. The active-site Proton donor is the D292. Residue 427 to 428 (GL) coordinates substrate. The interval 447–489 (QSHLGHLGGHQSQTEQQQSQAATNPSTQSNTDSSSEESPLWTP) is disordered. Low complexity predominate over residues 448 to 469 (SHLGHLGGHQSQTEQQQSQAAT). Polar residues predominate over residues 470–483 (NPSTQSNTDSSSEE).

It belongs to the ChlB/BchB/BchZ family. Protochlorophyllide reductase is composed of three subunits; ChlL, ChlN and ChlB. Forms a heterotetramer of two ChlB and two ChlN subunits. It depends on [4Fe-4S] cluster as a cofactor.

The catalysed reaction is chlorophyllide a + oxidized 2[4Fe-4S]-[ferredoxin] + 2 ADP + 2 phosphate = protochlorophyllide a + reduced 2[4Fe-4S]-[ferredoxin] + 2 ATP + 2 H2O. It participates in porphyrin-containing compound metabolism; chlorophyll biosynthesis (light-independent). Component of the dark-operative protochlorophyllide reductase (DPOR) that uses Mg-ATP and reduced ferredoxin to reduce ring D of protochlorophyllide (Pchlide) to form chlorophyllide a (Chlide). This reaction is light-independent. The NB-protein (ChlN-ChlB) is the catalytic component of the complex. This is Light-independent protochlorophyllide reductase subunit B from Prochlorococcus marinus (strain MIT 9303).